A 433-amino-acid chain; its full sequence is Serine hydroxymethyltransferase (433 aa).

(6S)-5,6,7,8-tetrahydrofolate is bound by residues leucine 132 and 136-138; that span reads GHL. At lysine 241 the chain carries N6-(pyridoxal phosphate)lysine.

This sequence belongs to the SHMT family. As to quaternary structure, homodimer. It depends on pyridoxal 5'-phosphate as a cofactor.

It localises to the cytoplasm. It catalyses the reaction (6R)-5,10-methylene-5,6,7,8-tetrahydrofolate + glycine + H2O = (6S)-5,6,7,8-tetrahydrofolate + L-serine. Its pathway is one-carbon metabolism; tetrahydrofolate interconversion. It functions in the pathway amino-acid biosynthesis; glycine biosynthesis; glycine from L-serine: step 1/1. Catalyzes the reversible interconversion of serine and glycine with tetrahydrofolate (THF) serving as the one-carbon carrier. This reaction serves as the major source of one-carbon groups required for the biosynthesis of purines, thymidylate, methionine, and other important biomolecules. Also exhibits THF-independent aldolase activity toward beta-hydroxyamino acids, producing glycine and aldehydes, via a retro-aldol mechanism. The chain is Serine hydroxymethyltransferase from Afipia carboxidovorans (strain ATCC 49405 / DSM 1227 / KCTC 32145 / OM5) (Oligotropha carboxidovorans).